Reading from the N-terminus, the 189-residue chain is Dirigent protein 21 (189 aa).

The signal sequence occupies residues 1 to 19 (MASLYLLLLLPLFLALILA). N72 and N173 each carry an N-linked (GlcNAc...) asparagine glycan.

The protein belongs to the plant dirigent protein family. In terms of assembly, homodimer.

Its subcellular location is the secreted. In terms of biological role, dirigent proteins impart stereoselectivity on the phenoxy radical-coupling reaction, yielding optically active lignans from two molecules of coniferyl alcohol in the biosynthesis of lignans, flavonolignans, and alkaloids and thus plays a central role in plant secondary metabolism. This is Dirigent protein 21 (DIR21) from Arabidopsis thaliana (Mouse-ear cress).